A 675-amino-acid chain; its full sequence is Pescadillo homolog (675 aa).

A disordered region spans residues 309–331; that stretch reads AGLDEAKEEPAAETTEESSETID. The BRCT domain occupies 352 to 471; the sequence is EAGSLFAPFT…RLVRPDLYAP (120 aa). The tract at residues 475–675 is disordered; sequence LPPHLSPWVK…RRKLEKGAAK (201 aa). Residues 498–518 show a composition bias toward acidic residues; the sequence is EQEEEGEAELDEDSDEEMEEA. The span at 519-530 shows a compositional bias: basic and acidic residues; it reads TSDKKAEAKADV. Composition is skewed to acidic residues over residues 532–541 and 549–580; these read SESEDEDESV and GTDD…DEEE. Residues 551 to 675 adopt a coiled-coil conformation; sequence DDDESESEDE…RRKLEKGAAK (125 aa). Positions 581-591 are enriched in basic and acidic residues; the sequence is AARTQHQKELE. Positions 611–623 are enriched in basic residues; it reads KKASQAKKIAAKK. Residues 624 to 634 are compositionally biased toward basic and acidic residues; the sequence is RKEEEELERQK.

Belongs to the pescadillo family. In terms of assembly, component of the NOP7 complex, composed of erb1, nop7 and ytm1. The complex is held together by erb1, which interacts with nop7 via its N-terminal domain and with ytm1 via a high-affinity interaction between the seven-bladed beta-propeller domains of the 2 proteins. The NOP7 complex associates with the 66S pre-ribosome.

The protein localises to the nucleus. It localises to the nucleolus. It is found in the nucleoplasm. Its function is as follows. Component of the NOP7 complex, which is required for maturation of the 25S and 5.8S ribosomal RNAs and formation of the 60S ribosome. The protein is Pescadillo homolog (nop7) of Aspergillus fumigatus (strain CBS 144.89 / FGSC A1163 / CEA10) (Neosartorya fumigata).